Here is a 284-residue protein sequence, read N- to C-terminus: Cytochrome P450 2C31 (284 aa).

Residue Cys229 coordinates heme.

Belongs to the cytochrome P450 family. The cofactor is heme.

The protein localises to the endoplasmic reticulum membrane. The protein resides in the microsome membrane. It carries out the reaction an organic molecule + reduced [NADPH--hemoprotein reductase] + O2 = an alcohol + oxidized [NADPH--hemoprotein reductase] + H2O + H(+). Cytochromes P450 are a group of heme-thiolate monooxygenases. In liver microsomes, this enzyme is involved in an NADPH-dependent electron transport pathway. It oxidizes a variety of structurally unrelated compounds, including steroids, fatty acids, and xenobiotics. The polypeptide is Cytochrome P450 2C31 (CYP2C31) (Capra hircus aegagrus (Wild goat)).